Reading from the N-terminus, the 445-residue chain is MNRETSRELYDRSLDVLVGGVNSTVRAAPQPYPTFVQSGDGGHVIDADGNRYIDWVMGLGPLLLGHDLPQPVTAAIQRRASDGPLFGTPTEIEVEHAEFVARHVPSVELLRFVNSGTEATVSAVRLARGYTGRNKIVVMQGGYHGAQESTLVEGDADHRGPSSAGIPPAFAQHTIPVPFNDADAVTEVFETHGDDIAAVLVEPILANKGIVEPVAGYHETLRDLTHDHGALLIWDEVITGFRVGGLGCAQSEFDITPDVTTFGKIIGGGFPVGAIGGRTDVMEEFTPTGDVFQAGTFSGHPVTMAAGLETLQYAAENDVYEHVNRLGGRLREGLAAVVAEHAPAYTVVGRDSMFKVVFTRDGDAQSGACTDGCRQDPDCERHAACPKTGADVGDAAVQRWNRVFRPQLLDAGVLLSQNQFESQFVSYGHTEADVDETIEAYRSAL.

Lys-264 carries the N6-(pyridoxal phosphate)lysine modification.

The protein belongs to the class-III pyridoxal-phosphate-dependent aminotransferase family. HemL subfamily. Requires pyridoxal 5'-phosphate as cofactor.

The protein resides in the cytoplasm. It carries out the reaction (S)-4-amino-5-oxopentanoate = 5-aminolevulinate. The protein operates within porphyrin-containing compound metabolism; protoporphyrin-IX biosynthesis; 5-aminolevulinate from L-glutamyl-tRNA(Glu): step 2/2. The protein is Glutamate-1-semialdehyde 2,1-aminomutase of Halobacterium salinarum (strain ATCC 29341 / DSM 671 / R1).